Here is a 155-residue protein sequence, read N- to C-terminus: DNA gyrase inhibitor (155 aa).

The protein belongs to the DNA gyrase inhibitor family. In terms of assembly, interacts with DNA gyrase.

The protein resides in the cytoplasm. Functionally, inhibits the supercoiling activity of DNA gyrase. Acts by inhibiting DNA gyrase at an early step, prior to (or at the step of) binding of DNA by the gyrase. It protects cells against toxins that target DNA gyrase, by inhibiting activity of these toxins and reducing the formation of lethal double-strand breaks in the cell. The sequence is that of DNA gyrase inhibitor from Salmonella arizonae (strain ATCC BAA-731 / CDC346-86 / RSK2980).